We begin with the raw amino-acid sequence, 3739 residues long: Cardiomyopathy-associated protein 5 (3739 aa).

Disordered stretches follow at residues 1–205 (MESG…PPIT), 268–814 (SLEP…SAFV), 835–884 (VSVS…AIQS), 967–1270 (LSED…SDVP), 1288–1313 (TQAS…RDAK), 1325–1637 (SSAL…NLVS), 1650–1969 (EMNR…EKGK), 1986–2016 (SSIP…AIEP), 2065–2246 (FLSN…WETR), 2273–2318 (AVGE…LALD), 2377–2498 (VYPE…SAVE), 2513–2532 (KKQE…TSKD), and 2579–2616 (SADG…SEDQ). A compositionally biased stretch (acidic residues) spans 18–47 (ADEEVAQELETEEESEGEGEETAAESEEEP). A compositionally biased stretch (basic and acidic residues) spans 48–62 (DARLSDEDEEGKTKQ). The span at 84-106 (TWETNSSRSSTPWASGESQTSGI) shows a compositional bias: polar residues. Residues 130–153 (RTRKRTQKSKRGSPSLRRKGSKKR) show a composition bias toward basic residues. The residue at position 155 (Ser155) is a Phosphoserine. 2 stretches are compositionally biased toward polar residues: residues 156–175 (LESQ…SESP) and 325–336 (ADSNLNVPSSTE). Residues 380–406 (ATMVLERAKEELEQNAQGKESSEDDAS) are a coiled coil. 3 stretches are compositionally biased toward basic and acidic residues: residues 479–637 (IVHR…REEE), 644–663 (SIVH…REEE), and 670–730 (SIVH…ERGV). A run of 2 repeats spans residues 482-493 (REEEHAPEPIVH) and 494-505 (REEEHAPEPIVH). Positions 482–720 (REEEHAPEPI…EEHAPEPMVH (239 aa)) are 20 X 12 AA approximate tandem repeats of R-[DE]-[EK]-[EG]-H-[AV]-P-E-[PS]-[IM]-V-[HLR]. A 3; approximate repeat occupies 506–519 (REEEHAPEPESIVH). Copy 4 of the repeat occupies 520 to 531 (REEEHAPESIVH). One copy of the 5; approximate repeat lies at 532 to 545 (REEEHAPEPVPIVH). Residues 546-559 (REEEHAPEPESIVH) form a 6; approximate repeat. Repeat copies occupy residues 560-571 (REEEHAPEPIVH), 572-583 (RDKGHALEPIVH), 584-595 (REEEHAPEPIVH), and 596-607 (RDEGHAPEPIVH). One copy of the 11; approximate repeat lies at 608 to 621 (REEEHVPEPESIVR). A 12; approximate repeat occupies 622 to 633 (KGEEHAPEPIVH). The 14; approximate repeat unit spans residues 634–647 (REEEQVPEPESIVH). Copy 15 of the repeat occupies 648–659 (REEEHAPEPIVH). The 16; approximate repeat unit spans residues 660 to 673 (REEEQVPEPESIVH). 4 consecutive repeat copies span residues 674–685 (REEEHAPEPMVL), 686–696 (REEHAPEPIVR), 697–708 (REEEHAPEPIVH), and 709–720 (REEEHAPEPMVH). Over residues 740-756 (TEPEDSSLEEEIIELDY) the composition is skewed to acidic residues. Ser850 carries the phosphoserine modification. 2 stretches are compositionally biased toward polar residues: residues 861-884 (PAMT…AIQS) and 1151-1161 (CLTSPSEQTVL). 2 stretches are compositionally biased toward basic and acidic residues: residues 1188-1197 (AETEQNKVEP) and 1230-1242 (EHSE…EESS). Residues 1337–1351 (TSVLPTSQPSVSPES) are compositionally biased toward polar residues. 2 stretches are compositionally biased toward basic and acidic residues: residues 1441–1460 (LEQR…HSPP) and 1476–1486 (TEVKQESKITR). Polar residues predominate over residues 1522–1540 (ASSSATTVPVTKLDSNSTK). Composition is skewed to basic and acidic residues over residues 1620 to 1631 (NDKHEEITRSPD), 1697 to 1706 (IDSRDRDRSL), 1726 to 1742 (GPAE…ENRK), 1760 to 1770 (IEQKEPKRTLH), 1786 to 1803 (DKPE…ENLE), and 1836 to 1850 (EKPD…DRKP). Polar residues predominate over residues 1854–1863 (QLESSESTDL). Basic and acidic residues-rich tracts occupy residues 1874–1885 (DTDHTSETRNQE), 1896–1916 (LSQE…EGRK), 1992–2001 (KVSDNEDLET), and 2153–2165 (ARKE…HKET). Over residues 2181 to 2190 (KSAQSAFTRM) the composition is skewed to polar residues. Position 2192 is a phosphoserine (Ser2192). 5 stretches are compositionally biased toward basic and acidic residues: residues 2212–2244 (GEDR…DGWE), 2279–2299 (RMPE…RLEQ), 2306–2318 (KLME…LALD), 2377–2419 (VYPE…ETDG), and 2429–2448 (ELEK…RRFV). Phosphoserine is present on Ser2411. Ser2495 is subject to Phosphoserine. The segment covering 2513–2523 (KKQETWSDRPT) has biased composition (basic and acidic residues). Positions 2640 to 2664 (SVDQEESEQMQDKLQYLEEKASFKS) form a coiled coil. Disordered regions lie at residues 2667–2725 (VHDE…QPTV), 2742–2773 (LSPG…SSAE), 2791–2835 (GPEK…GMPL), 2881–2959 (EKNE…EREI), 3027–3047 (LESE…DVNL), and 3111–3174 (PEEP…QKEP). Residues 2682–2709 (SKLEVPDRKITSLKENKTKETHKTKEEI) show a composition bias toward basic and acidic residues. Residues 2731–3041 (YFEKYTLIDY…SSQGNEAGNA (311 aa)) form a required for RYR2 clustering region. Over residues 2762-2773 (KTLTSFPESSAE) the composition is skewed to polar residues. Basic and acidic residues-rich tracts occupy residues 2791-2804 (GPEK…HAEM) and 2812-2828 (KPDD…DVDS). A Phosphoserine modification is found at Ser2905. The span at 2918-2929 (YILKDDILHDES) shows a compositional bias: basic and acidic residues. The span at 3030-3047 (EPSSQGNEAGNASPDVNL) shows a compositional bias: polar residues. Residues 3153–3162 (VWDRTEDQSA) show a composition bias toward basic and acidic residues. Residues 3187–3214 (KSLVSEMDKALDIHKDHEVSALDTAISA) are amphipathic helix H1. The B-box coiled-coil; BBC stretch occupies residues 3215–3342 (VKVQLGEFLE…ERLLSAMEST (128 aa)). Residues 3244–3323 (FNTIEEKCSK…REAEELDETV (80 aa)) adopt a coiled-coil conformation. Residues 3301–3318 (SMDTAKDTLETIVREAEE) form an amphipathic helix H2 region. Fibronectin type-III domains are found at residues 3374-3475 (VPQP…TAPS) and 3476-3568 (TPVI…TRGT). The tract at residues 3421-3437 (EINELVEEYRLTVKESC) is amphipathic helix H3. The B30.2/SPRY domain maps to 3550-3735 (NASGTSEQSE…LHLGLEPPDS (186 aa)).

Interacts with PRKAR2A. Interacts with ACTN2, DES and DTNBP1/dysbindin. Interacts with DMD/dystrophin. Interacts with the calcineurin catalytic subunit PPP3CA. Interacts with TTN. Interacts with CAPN3; this interaction, which results in CMYA5 proteolysis, may protect CAPN3 from autolysis. Interacts with FSD2. In cardiac muscles, identified in a complex composed of FSD2, CMYA5 and RYR2. Post-translationally, phosphorylated by PKA. Expressed in skin as well as in cardiac muscle. Expressed in skeletal muscle (at protein level).

It is found in the nucleus. Its subcellular location is the cytoplasm. The protein resides in the perinuclear region. The protein localises to the myofibril. It localises to the sarcomere. It is found in the m line. Its subcellular location is the sarcoplasmic reticulum. May serve as an anchoring protein that mediates the subcellular compartmentation of protein kinase A (PKA) via binding to PRKAR2A. May attenuate calcineurin ability to induce slow-fiber gene program in muscle and may negatively modulate skeletal muscle regeneration. Plays a role in the assembly of ryanodine receptor (RYR2) clusters in striated muscle. This chain is Cardiomyopathy-associated protein 5 (Cmya5), found in Mus musculus (Mouse).